We begin with the raw amino-acid sequence, 233 residues long: UPF0173 metal-dependent hydrolase Igni_1254 (233 aa).

The protein belongs to the UPF0173 family.

The protein is UPF0173 metal-dependent hydrolase Igni_1254 of Ignicoccus hospitalis (strain KIN4/I / DSM 18386 / JCM 14125).